Reading from the N-terminus, the 174-residue chain is uncharacterized protein (174 aa).

This is an uncharacterized protein from Bacillus subtilis (strain 168).